Consider the following 360-residue polypeptide: Protein Wnt-2 (360 aa).

A signal peptide spans 1 to 25 (MNAPLAGIWPWLPLLLTWLAPEVSS). Cystine bridges form between Cys76–Cys87, Cys127–Cys135, Cys137–Cys157, Cys206–Cys220, Cys208–Cys215, Cys278–Cys309, Cys294–Cys304, Cys308–Cys348, Cys324–Cys339, Cys326–Cys336, and Cys331–Cys332. Ser212 carries the O-palmitoleoyl serine; by PORCN lipid modification. Asn295 carries N-linked (GlcNAc...) asparagine glycosylation.

This sequence belongs to the Wnt family. Palmitoleoylation is required for efficient binding to frizzled receptors. Depalmitoleoylation leads to Wnt signaling pathway inhibition.

Its subcellular location is the secreted. It is found in the extracellular space. The protein resides in the extracellular matrix. Ligand for members of the frizzled family of seven transmembrane receptors. Functions in the canonical Wnt signaling pathway that results in activation of transcription factors of the TCF/LEF family. Functions as a upstream regulator of FGF10 expression. Plays an important role in embryonic lung development. May contribute to embryonic brain development by regulating the proliferation of dopaminergic precursors and neurons. The chain is Protein Wnt-2 (WNT2) from Loxodonta africana (African elephant).